Reading from the N-terminus, the 1239-residue chain is Potassium channel subfamily T member 1 (1239 aa).

The segment at 1–45 (MARAKLPRSPSEGKAGPGDTPAGSAAPEEPHGLSPLLPTRGGGSV) is disordered. Residues 1-93 (MARAKLPRSP…LFFIKNQRSS (93 aa)) are Cytoplasmic-facing. The helical transmembrane segment at 94–126 (LRIRLFNFSLKLLTCLLYIVRVLLDNPDQGIGC) threads the bilayer. Over 127 to 153 (WGCTKYNYTFNGSSSEFHWAPILWVER) the chain is Extracellular. 2 N-linked (GlcNAc...) asparagine glycosylation sites follow: Asn133 and Asn137. A helical membrane pass occupies residues 154-178 (KMALWVIQVIVATISFLETMLLIYL). Residues 179-192 (SYKGNIWEQIFHVS) lie on the Cytoplasmic side of the membrane. The chain crosses the membrane as a helical span at residues 193–208 (FVLEMINTLPFIITVF). Topologically, residues 209–215 (WPPLRNL) are extracellular. The chain crosses the membrane as a helical span at residues 216–233 (FIPVFLNCWLAKHALENM). Residues 234–246 (INDFHRAILRTQS) lie on the Cytoplasmic side of the membrane. Residues 247-274 (AMFNQVLILFCTLLCLVFTGTCGIQHLE) form a helical membrane-spanning segment. Residues 275 to 281 (RAGGNLN) are Extracellular-facing. An intramembrane region (pore-forming) is located at residues 282 to 302 (LLTSFYFCIVTFSTVGFGDVT). The K(+) site is built by Val296 and Gly297. The Extracellular segment spans residues 303 to 304 (PK). Residues 305-338 (IWPSQLLVVILICVTLVVLPLQFEELVYLWMERQ) form a helical membrane-spanning segment. Over 339–1239 (KSGGNYSRHR…NPETRDETQL (901 aa)) the chain is Cytoplasmic. The region spanning 352–488 (EKHVVLCVSS…FHVKFADHVV (137 aa)) is the RCK N-terminal 1 domain. Na(+) is bound by residues Leu513, His516, Ser538, and Asn540. The disordered stretch occupies residues 658 to 689 (QNTDCRPSQGGSGGGGGKLTLPTENGSGSRRP). Positions 758 and 759 each coordinate Zn(2+). K(+) contacts are provided by Arg761 and Lys764. Residues Arg761 and Lys764 each contribute to the Na(+) site. Zn(2+) contacts are provided by Cys766 and His768. Asn769, Tyr771, Tyr777, and Gly778 together coordinate K(+). Position 771 (Tyr771) interacts with Na(+). Position 779 (Phe779) interacts with Na(+). An RCK N-terminal 2 domain is found at 781 to 921 (NKLIIVSAET…QFRAKDSYSL (141 aa)). Positions 787, 818, 820, 842, and 865 each coordinate K(+). Disordered regions lie at residues 1053–1081 (REAK…ADPV) and 1212–1239 (TSSS…ETQL). Residues 1213–1230 (SSSQSRKSSCSNKLSSCN) show a composition bias toward low complexity.

It belongs to the potassium channel family. Calcium-activated (TC 1.A.1.3) subfamily. KCa4.1/KCNT1 sub-subfamily. As to quaternary structure, homotetramer; which constitutes the Na(+)-activated K(+) channel. Interacts with KCNT2; these heterodimer channels differ from the homomers in their unitary conductance, kinetic behavior, subcellular localization, and response to activation of protein kinase C. Interacts (via C-terminus) with FMR1; this interaction alters gating properties of KCNT1. Interacts with CRBN via its cytoplasmic C-terminus. In terms of assembly, does not interact with KCNT2. Phosphorylated by protein kinase C. Phosphorylation of the C-terminal domain increases channel activity. Detected in brain and brainstem, in vestibular and oculomotor nuclei, the medial nucleus of the trapezoid in the auditory system, in olfactory bulb, red nucleus, and deep cerebellar nuclei. Detected in thalamus, substantia nigra, and amygdala (at protein level). Highly expressed in the brain and kidney.

The protein resides in the cell membrane. The catalysed reaction is K(+)(in) = K(+)(out). Its activity is regulated as follows. Activated by high intracellular Na(+) level. In addition to activation by Na(+), is cooperatively activated by intracellular Cl(-) levels. Activated upon stimulation of G-protein coupled receptors, such as CHRM1 and GRIA1. Functionally, sodium-activated K(+) channel. Acts as an important mediator of neuronal membrane excitability. Contributes to the delayed outward currents. Regulates neuronal bursting in sensory neurons. Contributes to synaptic development and plasticity. The sequence is that of Potassium channel subfamily T member 1 (Kcnt1) from Rattus norvegicus (Rat).